A 126-amino-acid chain; its full sequence is Small ribosomal subunit protein uS8 (126 aa).

It belongs to the universal ribosomal protein uS8 family. In terms of assembly, part of the 30S ribosomal subunit. Contacts proteins S5 and S12.

In terms of biological role, one of the primary rRNA binding proteins, it binds directly to 16S rRNA central domain where it helps coordinate assembly of the platform of the 30S subunit. In Oleidesulfovibrio alaskensis (strain ATCC BAA-1058 / DSM 17464 / G20) (Desulfovibrio alaskensis), this protein is Small ribosomal subunit protein uS8.